The chain runs to 403 residues: Aspartic protease pepA (403 aa).

The signal sequence occupies residues 1 to 20 (MVLITQLGAALAVFSALTVA). Positions 21-67 (APTKGKARFSAPQVGIPKKAKHHPAAAYARALHKFGMKIPKAVSDAA) are cleaved as a propeptide — activation peptide. The region spanning 82-400 (YVTQVTVGGS…DTQGPRIGFA (319 aa)) is the Peptidase A1 domain. D98 is a catalytic residue. N-linked (GlcNAc...) asparagine glycosylation occurs at N270. D293 is a catalytic residue. Residues C329 and C362 are joined by a disulfide bond.

It belongs to the peptidase A1 family. Monomer.

Its subcellular location is the secreted. Its function is as follows. Secreted aspartic endopeptidase that allows assimilation of proteinaceous substrates. The scissile peptide bond is attacked by a nucleophilic water molecule activated by two aspartic residues in the active site. Shows a broad primary substrate specificity. Favors hydrophobic residues at the P1 and P1' positions. The polypeptide is Aspartic protease pepA (Arthroderma gypseum (strain ATCC MYA-4604 / CBS 118893) (Microsporum gypseum)).